Here is a 369-residue protein sequence, read N- to C-terminus: Dehydrogenase pigH (369 aa).

An Enoyl reductase (ER) domain is found at 13-367 (KAPLLEVKAA…QGVSAKKIVV (355 aa)). 44–49 (IDWLIQ) is an NADP(+) binding site. Asn79 and Asn101 each carry an N-linked (GlcNAc...) asparagine glycan. Residues 197–200 (SRKN) and Tyr215 each bind NADP(+). A helical transmembrane segment spans residues 280 to 300 (TIIFFVSWIISFKFKGLLKGI). 360 to 361 (VS) contacts NADP(+).

This sequence belongs to the zinc-containing alcohol dehydrogenase family.

The protein resides in the membrane. It functions in the pathway secondary metabolite biosynthesis. Its function is as follows. Dehydrogenase; part of the gene cluster that mediates the biosynthesis of azaphilone pigments (MonAzPs), a complex mixture of compounds with a common azaphilone skeleton very widely used as food colorants. Within the pathway, pigH might be involved in the late steps of yellow pigments monascin and ankaflavin biosynthesis. The first step of the pathway is performed by the nrPKS pigA that forms the hexaketide precursor from successive condensations of five malonyl-CoA units, with a simple acetyl-CoA starter unit. The role of esterase pigG is not clear, but it may play at most a supplementary role in the formation of the benzaldehyde produced by the pigA nrPKS. This very reactive benzaldehyde is intercepted by the pigC ketoreductase that to provide the first stable enzyme-free MonAzPs intermediate, 6-(4-hydroxy-2-oxopentyl)-3-methyl-2,4-dioxocyclohexane carbaldehyde, also known as M7PKS-1. The FAD-dependent monooxygenase pigN hydroxylates M7PKS-1 at C-4, which triggers the formation of the pyran ring. PigJ, pigK and pigD are involved in the acetylation of the pyran ring. PigJ and pigK form the two subunits of a dedicated fungal FAS that produces the side chain fatty acyl moiety of MonAzPs and pigD transfers the fatty acyl chain to the C-4 alcohol. PigM and pigO are involved in the elimination of the omega-1 alcohol. PigM acts as an O-acetyltransferase that synthesizes the putative O-11 acetyl intermediate whereas pigO eliminates acetic acid to yield an intermediate with a C10(11) double bond. The dehydration of the C-11 alcohol followed by the reduction of the C6(7) double bond by the NAD(P)H-dependent oxidoreductase pigE increases the electrophilicity of the C-5 ketone of the resulting acyl benzopyran. This in turn sets up the C-5 ketone for an intramolecular Knoevenagel aldol condensation with the C-20 enol of the side chain. This condensation affords the characteristic linear tricyclic carbon skeletons of the yellow pigments that serve as the common precursors for the classical yellow pigments monascin and ankaflavin, orange pigments rubopunctatin and monascorubrin, and red pigments ribropunctamine and monascorubramine. The FAD-dependent oxidoreductase pigF is especially invoved in the biosynthesis of orange and red pigments via desaturation of C6(7). The polypeptide is Dehydrogenase pigH (Monascus ruber (Mold)).